The sequence spans 380 residues: Putative 8-amino-7-oxononanoate synthase (380 aa).

Arg18 provides a ligand contact to substrate. 106–107 (GY) serves as a coordination point for pyridoxal 5'-phosphate. His131 serves as a coordination point for substrate. Pyridoxal 5'-phosphate-binding positions include Ser179, 205-208 (DEAH), and 236-239 (TFGK). The residue at position 239 (Lys239) is an N6-(pyridoxal phosphate)lysine. Substrate is bound at residue Thr352.

This sequence belongs to the class-II pyridoxal-phosphate-dependent aminotransferase family. BioF subfamily. Homodimer. Pyridoxal 5'-phosphate serves as cofactor.

The catalysed reaction is 6-carboxyhexanoyl-[ACP] + L-alanine + H(+) = (8S)-8-amino-7-oxononanoate + holo-[ACP] + CO2. The protein operates within cofactor biosynthesis; biotin biosynthesis. In terms of biological role, catalyzes the decarboxylative condensation of pimeloyl-[acyl-carrier protein] and L-alanine to produce 8-amino-7-oxononanoate (AON), [acyl-carrier protein], and carbon dioxide. The sequence is that of Putative 8-amino-7-oxononanoate synthase (bioF) from Neisseria gonorrhoeae (strain ATCC 700825 / FA 1090).